Reading from the N-terminus, the 114-residue chain is Ribonuclease P protein component (114 aa).

Belongs to the RnpA family. In terms of assembly, consists of a catalytic RNA component (M1 or rnpB) and a protein subunit.

The catalysed reaction is Endonucleolytic cleavage of RNA, removing 5'-extranucleotides from tRNA precursor.. Functionally, RNaseP catalyzes the removal of the 5'-leader sequence from pre-tRNA to produce the mature 5'-terminus. It can also cleave other RNA substrates such as 4.5S RNA. The protein component plays an auxiliary but essential role in vivo by binding to the 5'-leader sequence and broadening the substrate specificity of the ribozyme. The protein is Ribonuclease P protein component of Buchnera aphidicola subsp. Schizaphis graminum (strain Sg).